A 238-amino-acid polypeptide reads, in one-letter code: MKIDVLFYPEKLKNAEDKAVVVLDVLRATTTIATALAAGAEKIYPVSSIKEAFLLKKKISGALLGGERGGIKVPGFDLGNSPLEYQGLKGKTIILSSTNGTKTLKKAVSARTLIAGSIVNAKAVADYLLKLNLDVVLMPSGTDSQFSLEDFAGAGYIISLLAEQKKIELSDQAYVSFELARSNPPEEILTRSFHGQRLINLGFARDVEYCAKLNLLDVVPEGHLQEGRLVIESSRLFR.

The protein belongs to the ComB family. It depends on Mg(2+) as a cofactor.

It catalyses the reaction (2R)-O-phospho-3-sulfolactate + H2O = (2R)-3-sulfolactate + phosphate. This is Probable 2-phosphosulfolactate phosphatase from Carboxydothermus hydrogenoformans (strain ATCC BAA-161 / DSM 6008 / Z-2901).